A 229-amino-acid chain; its full sequence is ATP synthase subunit a (229 aa).

A run of 6 helical transmembrane segments spans residues 25 to 45 (ADAI…SLIA), 86 to 106 (IATL…PGFF), 111 to 131 (NLNT…IVGI), 142 to 162 (FMGP…IGHL), 181 to 201 (LVLM…MMLM), and 202 to 222 (GVLV…IYIQ).

The protein belongs to the ATPase A chain family. F-type ATPases have 2 components, CF(1) - the catalytic core - and CF(0) - the membrane proton channel. CF(1) has five subunits: alpha(3), beta(3), gamma(1), delta(1), epsilon(1). CF(0) has three main subunits: a(1), b(2) and c(9-12). The alpha and beta chains form an alternating ring which encloses part of the gamma chain. CF(1) is attached to CF(0) by a central stalk formed by the gamma and epsilon chains, while a peripheral stalk is formed by the delta and b chains.

The protein localises to the cell inner membrane. Key component of the proton channel; it plays a direct role in the translocation of protons across the membrane. The polypeptide is ATP synthase subunit a (Geobacter sulfurreducens (strain ATCC 51573 / DSM 12127 / PCA)).